Consider the following 224-residue polypeptide: Cytidylate kinase (224 aa).

11–19 contacts ATP; it reads GPAAAGKST.

The protein belongs to the cytidylate kinase family. Type 1 subfamily.

The protein localises to the cytoplasm. The catalysed reaction is CMP + ATP = CDP + ADP. It catalyses the reaction dCMP + ATP = dCDP + ADP. This chain is Cytidylate kinase, found in Geobacillus sp. (strain WCH70).